The following is a 312-amino-acid chain: Aquaglyceroporin-2 (312 aa).

6 helical membrane passes run 78–98 (FLGN…SLLV), 104–124 (LGLT…SLGI), 151–171 (YIAA…GVFA), 203–223 (GIFY…LCVC), 239–259 (VAIG…SPLA), and 286–306 (YYFW…LFLY).

This sequence belongs to the MIP/aquaporin (TC 1.A.8) family.

Its subcellular location is the membrane. It carries out the reaction glycerol(in) = glycerol(out). The catalysed reaction is H2O(in) = H2O(out). The enzyme catalyses urea(in) = urea(out). Mediates water and glycerol transport across cell membranes. Permeable to urea. Permeable to methylamine/methylammonium. Permeable to dihydroxyacetone. The sequence is that of Aquaglyceroporin-2 from Trypanosoma brucei brucei.